Reading from the N-terminus, the 474-residue chain is Cbb3-type cytochrome c oxidase subunit CcoN1 (474 aa).

Topologically, residues M1 to Q16 are cytoplasmic. A helical membrane pass occupies residues F17–A37. At Q38–H60 the chain is on the periplasmic side. Residue H60 coordinates heme b. Residues T61–V81 form a helical membrane-spanning segment. Over Q82 to A96 the chain is Cytoplasmic. A helical transmembrane segment spans residues F97–F117. The Periplasmic portion of the chain corresponds to T118 to P129. Residues I130–A150 traverse the membrane as a helical segment. Residues K151 to H156 are Cytoplasmic-facing. A helical transmembrane segment spans residues I157–V177. Residues N178 to Y205 lie on the Periplasmic side of the membrane. The helical transmembrane segment at G206–V226 threads the bilayer. Position 207 (H207) interacts with Cu cation. Residues P227–R238 lie on the Cytoplasmic side of the membrane. The chain crosses the membrane as a helical span at residues L239–L259. The Cu cation site is built by H257 and H258. The Periplasmic segment spans residues H260–S270. Residues L271–M291 form a helical membrane-spanning segment. The Cytoplasmic portion of the chain corresponds to M292 to R308. A helical membrane pass occupies residues F309 to I329. The Periplasmic segment spans residues K330–H345. Positions 345 and 347 each coordinate heme b. The helical transmembrane segment at V346–V366 threads the bilayer. Residues P367–H384 lie on the Cytoplasmic side of the membrane. The helical transmembrane segment at F385–A405 threads the bilayer. Residues Q406 to P432 lie on the Periplasmic side of the membrane. The helical transmembrane segment at G433–Y453 threads the bilayer. Residues N454–A474 lie on the Cytoplasmic side of the membrane.

The protein belongs to the heme-copper respiratory oxidase family. Component of the cbb3-type cytochrome c oxidase at least composed of CcoN, CcoO, CcoQ and CcoP. It depends on Cu(2+) as a cofactor. Heme b serves as cofactor.

Its subcellular location is the cell inner membrane. The catalysed reaction is 4 Fe(II)-[cytochrome c] + O2 + 8 H(+)(in) = 4 Fe(III)-[cytochrome c] + 2 H2O + 4 H(+)(out). It participates in energy metabolism; oxidative phosphorylation. In terms of biological role, cbb3-type cytochrome c oxidase is the component of the respiratory chain that catalyzes the reduction of oxygen to water. Subunits CcoN and CcoO form the functional core of the enzyme complex. Subunits CcoP and CcoQ may optionally bind to the core. CcoN is the catalytic subunit of the enzyme. Electrons originating in cytochrome c or a quinol are transferred to the bimetallic center formed by a high-spin heme and copper B. The complex also functions as a proton pump. The protein is Cbb3-type cytochrome c oxidase subunit CcoN1 of Stutzerimonas stutzeri (Pseudomonas stutzeri).